A 446-amino-acid chain; its full sequence is Chromosomal replication initiator protein DnaA (446 aa).

Positions 1-72 are domain I, interacts with DnaA modulators; the sequence is MENILDLWNQ…ADTIYELTGE (72 aa). The segment at 72–109 is domain II; the sequence is EELSVKFVIPQNQDEENFLPKPQVKKAAKEEPSDFPQS. The interval 110 to 326 is domain III, AAA+ region; it reads MLNPKYTFDT…GALIRVVAYS (217 aa). ATP is bound by residues Gly154, Gly156, Lys157, and Thr158. A domain IV, binds dsDNA region spans residues 327 to 446; it reads SLINKDINAD…QVKEIKELLK (120 aa).

Belongs to the DnaA family. Oligomerizes as a right-handed, spiral filament on DNA at oriC.

The protein resides in the cytoplasm. In terms of biological role, plays an essential role in the initiation and regulation of chromosomal replication. ATP-DnaA binds to the origin of replication (oriC) to initiate formation of the DNA replication initiation complex once per cell cycle. Binds the DnaA box (a 9 base pair repeat at the origin) and separates the double-stranded (ds)DNA. Forms a right-handed helical filament on oriC DNA; dsDNA binds to the exterior of the filament while single-stranded (ss)DNA is stabiized in the filament's interior. The ATP-DnaA-oriC complex binds and stabilizes one strand of the AT-rich DNA unwinding element (DUE), permitting loading of DNA polymerase. After initiation quickly degrades to an ADP-DnaA complex that is not apt for DNA replication. Binds acidic phospholipids. The chain is Chromosomal replication initiator protein DnaA from Bacillus velezensis (strain DSM 23117 / BGSC 10A6 / LMG 26770 / FZB42) (Bacillus amyloliquefaciens subsp. plantarum).